The sequence spans 307 residues: Haloalkane dehalogenase (307 aa).

Residues proline 34–glycine 158 enclose the AB hydrolase-1 domain. Aspartate 106 serves as the catalytic Nucleophile. Glutamate 130 serves as the catalytic Proton donor. Histidine 272 (proton acceptor) is an active-site residue.

It belongs to the haloalkane dehalogenase family. Type 2 subfamily. In terms of assembly, monomer.

It catalyses the reaction 1-haloalkane + H2O = a halide anion + a primary alcohol + H(+). It participates in xenobiotic degradation; 1,2-dibromoethane degradation. Its function is as follows. Catalyzes hydrolytic cleavage of carbon-halogen bonds in halogenated aliphatic compounds, leading to the formation of the corresponding primary alcohols, halide ions and protons. Has a broad substrate specificity, which includes mono- and di-chlorinated and brominated alkanes. The highest activity was found with 1,2-dibromoethane, whereas low activity was measured with the analog 1,2-dichloroethane. This is Haloalkane dehalogenase (dhaAF) from Mycobacterium sp. (strain GP1).